Reading from the N-terminus, the 155-residue chain is Ribosomal RNA large subunit methyltransferase H (155 aa).

S-adenosyl-L-methionine is bound by residues Leu73, Gly104, and 123–128 (LSPLTL).

It belongs to the RNA methyltransferase RlmH family. In terms of assembly, homodimer.

Its subcellular location is the cytoplasm. It carries out the reaction pseudouridine(1915) in 23S rRNA + S-adenosyl-L-methionine = N(3)-methylpseudouridine(1915) in 23S rRNA + S-adenosyl-L-homocysteine + H(+). Specifically methylates the pseudouridine at position 1915 (m3Psi1915) in 23S rRNA. This Ectopseudomonas mendocina (strain ymp) (Pseudomonas mendocina) protein is Ribosomal RNA large subunit methyltransferase H.